A 266-amino-acid chain; its full sequence is Hydroxypyruvate/pyruvate aldolase (266 aa).

Residue histidine 48 is the Proton acceptor of the active site. Residues glutamate 152 and aspartate 178 each contribute to the a divalent metal cation site.

Belongs to the HpcH/HpaI aldolase family. It depends on a divalent metal cation as a cofactor.

It carries out the reaction D-glyceraldehyde + pyruvate = 2-dehydro-3-deoxy-L-galactonate. The catalysed reaction is 2-dehydro-3-deoxy-D-gluconate = D-glyceraldehyde + pyruvate. In terms of biological role, aldolase which can catalyze in vitro the aldolisation reaction between hydroxypyruvate (HPA) or pyruvate (PA) and D-glyceraldehyde (D-GA). The condensation of pyruvate and D-glyceraldehyde produces 2-dehydro-3-deoxy-L-galactonate as the major product and 2-dehydro-3-deoxy-D-gluconate. Has weak activity with hydroxypyruvate and D-glyceraldehyde. The chain is Hydroxypyruvate/pyruvate aldolase from Agrobacterium fabrum (strain C58 / ATCC 33970) (Agrobacterium tumefaciens (strain C58)).